The primary structure comprises 993 residues: Structural polyprotein (993 aa).

Aspartate 11 provides a ligand contact to a divalent metal cation. The 243-residue stretch at 494–736 (ADKGYEVVAN…AGRQYHLAMA (243 aa)) folds into the Peptidase S50 domain. The active-site Nucleophile is serine 633. Lysine 673 is an active-site residue. The interval 950-993 (AMEMKHRNPRRALPKPKPKPNAPTQRPPGRLGRWIRTVSDEDLE) is disordered. Over residues 956 to 967 (RNPRRALPKPKP) the composition is skewed to basic residues. Residues 984 to 993 (IRTVSDEDLE) are interaction with VP1 protein.

Homotrimer. A central divalent metal stabilizes the VP2 trimer. Interacts with host ITGA4/ITGB1. As to quaternary structure, homodimer. Interacts (via C-terminus) with VP1 in the cytoplasm. Interacts with VP2. Post-translationally, specific enzymatic cleavages yield mature proteins. The capsid assembly seems to be regulated by polyprotein processing. The protease VP4 cleaves itself off the polyprotein, thus releasing pre-VP2 and VP3 within the infected cell. During capsid assembly, the C-terminus of pre-VP2 is further processed by VP4, giving rise to VP2, the external capsid protein and three small peptides that all stay closely associated with the capsid.

The protein localises to the virion. It is found in the host cytoplasm. Functionally, capsid protein VP2 self assembles to form an icosahedral capsid with a T=13 symmetry, about 70 nm in diameter, and consisting of 260 VP2 trimers. The capsid encapsulates the genomic dsRNA. VP2 is also involved in attachment and entry into the host cell by interacting with host ITGA4/ITGB1. Its function is as follows. The precursor of VP2 plays an important role in capsid assembly. First, pre-VP2 and VP2 oligomers assemble to form a procapsid. Then, the pre-VP2 intermediates may be processed into VP2 proteins by proteolytic cleavage mediated by VP4 to obtain the mature virion. The final capsid is composed of pentamers and hexamers but VP2 has a natural tendency to assemble into all-pentameric structures. Therefore pre-VP2 may be required to allow formation of the hexameric structures. In terms of biological role, protease VP4 is a serine protease that cleaves the polyprotein into its final products. Pre-VP2 is first partially cleaved, and may be completely processed by VP4 upon capsid maturation. Capsid protein VP3 plays a key role in virion assembly by providing a scaffold for the capsid made of VP2. May self-assemble to form a T=4-like icosahedral inner-capsid composed of at least 180 trimers. Plays a role in genomic RNA packaging by recruiting VP1 into the capsid and interacting with the dsRNA genome segments to form a ribonucleoprotein complex. Additionally, the interaction of the VP3 C-terminal tail with VP1 removes the inherent structural blockade of the polymerase active site. Thus, VP3 can also function as a transcriptional activator. Functionally, structural peptide 1 is a small peptide derived from pre-VP2 C-terminus. It destabilizes and perforates cell membranes, suggesting a role during entry. Its function is as follows. Structural peptide 2 is a small peptide derived from pVP2 C-terminus. It is not essential for the virus viability, but viral growth is affected when missing. In terms of biological role, structural peptide 3 is a small peptide derived from pVP2 C-terminus. It is not essential for the virus viability, but viral growth is affected when missing. Structural peptide 4 is a small peptide derived from pVP2 C-terminus. It is essential for the virus viability. The chain is Structural polyprotein from Avian infectious bursal disease virus (strain PBG-98) (IBDV).